The primary structure comprises 205 residues: High frequency lysogenization protein HflD homolog (205 aa).

It belongs to the HflD family.

The protein resides in the cytoplasm. It localises to the cell inner membrane. In Shewanella pealeana (strain ATCC 700345 / ANG-SQ1), this protein is High frequency lysogenization protein HflD homolog.